The sequence spans 594 residues: Pentatricopeptide repeat-containing protein At1g15480, mitochondrial (594 aa).

The transit peptide at 1 to 67 (MFALSKVLRR…WSSSTGRRSL (67 aa)) directs the protein to the mitochondrion. The segment covering 62–75 (TGRRSLSSDAGAKT) has biased composition (low complexity). The interval 62-109 (TGRRSLSSDAGAKTTGDDDDLEDKNVDLATPDETSSDSEDGEEFSGDE) is disordered. Acidic residues predominate over residues 95-109 (TSSDSEDGEEFSGDE). 7 PPR repeats span residues 226–260 (GELV…GFPL), 261–294 (STFT…NLKP), 295–329 (NLNT…GVEL), 330–364 (DLRA…SLEE), 432–466 (SSNV…GCNI), 467–502 (GALT…QIKP), and 503–537 (LMSS…GYQS).

It belongs to the PPR family. P subfamily.

Its subcellular location is the mitochondrion. The sequence is that of Pentatricopeptide repeat-containing protein At1g15480, mitochondrial from Arabidopsis thaliana (Mouse-ear cress).